A 310-amino-acid polypeptide reads, in one-letter code: Malate dehydrogenase (310 aa).

Residues 7-13 (GAAGGIG) and Asp34 contribute to the NAD(+) site. Substrate-binding residues include Arg81 and Arg87. Residues Asn94 and 117-119 (ITN) each bind NAD(+). Residues Asn119 and Arg153 each contribute to the substrate site. The Proton acceptor role is filled by His177. Residue Met227 participates in NAD(+) binding.

This sequence belongs to the LDH/MDH superfamily. MDH type 1 family. Homodimer.

It catalyses the reaction (S)-malate + NAD(+) = oxaloacetate + NADH + H(+). Functionally, catalyzes the reversible oxidation of malate to oxaloacetate. This Vibrio vulnificus (strain YJ016) protein is Malate dehydrogenase.